The following is a 65-amino-acid chain: MPKMKTKKSASKRFQVRGSGSIKRGQAFKRHILTKKTTKNKRQLRGSAAVHETNVASVKAMMPFA.

Positions 1–15 (MPKMKTKKSASKRFQ) are enriched in basic residues. The disordered stretch occupies residues 1-27 (MPKMKTKKSASKRFQVRGSGSIKRGQA).

The protein belongs to the bacterial ribosomal protein bL35 family.

This Bordetella petrii (strain ATCC BAA-461 / DSM 12804 / CCUG 43448) protein is Large ribosomal subunit protein bL35.